We begin with the raw amino-acid sequence, 153 residues long: Histone H2B type W-T (153 aa).

The interval 1–54 is disordered; that stretch reads MATASAMAGPSSETTSEEQLITQEPKEANSTTSQKQSKQRKRGRHGPRRCHSNC. The segment covering 11 to 36 has biased composition (polar residues); that stretch reads SSETTSEEQLITQEPKEANSTTSQKQ. Residues 37–52 are compositionally biased toward basic residues; it reads SKQRKRGRHGPRRCHS.

Belongs to the histone H2B family. Can replace the conventional histone H2B in the nucleosome. The nucleosome is a histone octamer containing two molecules each of H2A, H2B, H3 and H4 assembled in one H3-H4 heterotetramer and two H2A-H2B heterodimers. The octamer wraps approximately 147 bp of DNA. As to expression, testis-specific (at protein level).

The protein resides in the nucleus membrane. It is found in the chromosome. Its subcellular location is the telomere. In terms of biological role, atypical histone H2B that can form nucleosomes structurally and dynamically indistinguishable from those containing conventional H2B. Nucleosomes wrap and compact DNA into chromatin, limiting DNA accessibility to the cellular machineries which require DNA as a template. Histones thereby play a central role in transcription regulation, DNA repair, DNA replication and chromosomal stability. DNA accessibility is regulated via a complex set of post-translational modifications of histones, also called histone code, and nucleosome remodeling. However, unlike conventional H2B, does not recruit chromosome condensation factors and does not participate in the assembly of mitotic chromosomes. May be important for telomere function and play a role in spermatogenesis. The protein is Histone H2B type W-T of Homo sapiens (Human).